Here is a 291-residue protein sequence, read N- to C-terminus: ATP synthase gamma chain (291 aa).

It belongs to the ATPase gamma chain family. As to quaternary structure, F-type ATPases have 2 components, CF(1) - the catalytic core - and CF(0) - the membrane proton channel. CF(1) has five subunits: alpha(3), beta(3), gamma(1), delta(1), epsilon(1). CF(0) has three main subunits: a, b and c.

It localises to the cell membrane. Functionally, produces ATP from ADP in the presence of a proton gradient across the membrane. The gamma chain is believed to be important in regulating ATPase activity and the flow of protons through the CF(0) complex. The polypeptide is ATP synthase gamma chain (Streptococcus equi subsp. zooepidemicus (strain MGCS10565)).